Consider the following 325-residue polypeptide: Glutarate 2-hydroxylase (325 aa).

Histidine 160, aspartate 162, and histidine 292 together coordinate Fe cation.

This sequence belongs to the glutarate hydroxylase family. In terms of assembly, homotetramer. Fe(2+) serves as cofactor.

The enzyme catalyses glutarate + 2-oxoglutarate + O2 = (S)-2-hydroxyglutarate + succinate + CO2. It participates in amino-acid degradation. In terms of biological role, acts as an alpha-ketoglutarate-dependent dioxygenase catalyzing hydroxylation of glutarate (GA) to L-2-hydroxyglutarate (L2HG). Functions in a L-lysine degradation pathway that proceeds via cadaverine, glutarate and L-2-hydroxyglutarate. The sequence is that of Glutarate 2-hydroxylase from Klebsiella pneumoniae (strain 342).